Consider the following 450-residue polypeptide: UDP-N-acetylglucosamine--peptide N-acetylglucosaminyltransferase stabilizing protein GtfB (450 aa).

It belongs to the GtfB family. In terms of assembly, forms a heterotetramer with 2 subunits each of GtfA and GtfB. Part of the accessory SecA2/SecY2 protein translocation apparatus required to export cell wall protein GspB.

Its subcellular location is the cell membrane. It functions in the pathway protein modification; protein glycosylation. In terms of biological role, required for polymorphic O-glycosylation of GspB, a serine-rich repeat cell wall protein encoded upstream in the same operon. A substrate-binding protein that is part of the accessory SecA2/SecY2 system specifically required to export GspB. The GtfA-GtfB complex adds GlcNAc from UDP-GlcNAc to GspB, attaching the first sugar residue. Upon coexpression in E.coli with GtfA glycosylates GspB constructs. Binds the GspB protein substrate; alone this subunit only recognizes partially glycosylated GspB, but is constrained by GtfA to also recognize unglycosylated protein. The enzyme probably modifies its tertiary conformation by opening and closing its intersubunit interfaces to accomodate the increasingly glycosylated substrate. This chain is UDP-N-acetylglucosamine--peptide N-acetylglucosaminyltransferase stabilizing protein GtfB, found in Streptococcus gordonii.